Consider the following 178-residue polypeptide: MORN repeat-containing protein 5 (178 aa).

3 MORN repeats span residues 8–30, 31–53, and 54–75; these read YDGDYNNGRMEGTGEYTIPTHTR, YVGEMKDGMFHGKGVLHFPNGSK, and YEGTWEKGICKEGKYTFSDGLK.

It is found in the cell projection. It localises to the cilium. The protein localises to the flagellum. The polypeptide is MORN repeat-containing protein 5 (morn5) (Danio rerio (Zebrafish)).